Reading from the N-terminus, the 573-residue chain is Delta 8-(E)-sphingolipid desaturase (573 aa).

The 76-residue stretch at 2–77 folds into the Cytochrome b5 heme-binding domain; that stretch reads SRVLSRRDIA…FKIWKIGRID (76 aa). Residues histidine 37 and histidine 60 each coordinate heme. Residues 228 to 248 traverse the membrane as a helical segment; it reads LFGISFYLLSLKWFAISAICL. Positions 260–264 match the Histidine box-1 motif; the sequence is HDAGH. The helical transmembrane segment at 273 to 293 threads the bilayer; the sequence is VDNIIGMTVASWIGGLSLGWW. The Histidine box-2 motif lies at 297 to 301; that stretch reads HDVHH. 3 consecutive transmembrane segments (helical) span residues 353-372, 393-413, and 422-442; these read YLYY…LSWM, LAEL…KQMP, and VMIS…SHFA. Residues 481–485 carry the Histidine box-3 motif; it reads QVIHH.

Belongs to the fatty acid desaturase type 1 family.

It localises to the membrane. It carries out the reaction an N-acylsphing-4-enine + 2 Fe(II)-[cytochrome b5] + O2 + 2 H(+) = a (4E,8E)-4-sphinga-4,8-dienine ceramide + 2 Fe(III)-[cytochrome b5] + 2 H2O. It functions in the pathway lipid metabolism; sphingolipid metabolism. Delta(8)-fatty-acid desaturase which introduces a double bond at the 8-position in the long-chain base (LCB) of ceramides. Required for the formation of the di-unsaturated sphingoid base (E,E)-sphinga-4,8-dienine during glucosylceramide (GluCer) biosynthesis. The chain is Delta 8-(E)-sphingolipid desaturase from Kluyveromyces lactis (Yeast).